Here is a 232-residue protein sequence, read N- to C-terminus: Large ribosomal subunit protein uL1 (232 aa).

The protein belongs to the universal ribosomal protein uL1 family. As to quaternary structure, part of the 50S ribosomal subunit.

In terms of biological role, binds directly to 23S rRNA. The L1 stalk is quite mobile in the ribosome, and is involved in E site tRNA release. Functionally, protein L1 is also a translational repressor protein, it controls the translation of the L11 operon by binding to its mRNA. The sequence is that of Large ribosomal subunit protein uL1 from Phocaeicola vulgatus (strain ATCC 8482 / DSM 1447 / JCM 5826 / CCUG 4940 / NBRC 14291 / NCTC 11154) (Bacteroides vulgatus).